The primary structure comprises 248 residues: MQAHPNTVDPSEIAKFEAMAAEWWDPHGKFKPLHMLNPCRLDYITRQIAGEFDRDLGTERPFAGLRLLDIGCGGGLLSEPMARLGAEVVGADAAEGNLPVARIHAEQSGLEIDYRHTTAEALAEAGEQFDVVLNMEVVEHVADPLSYLRATHDLLKPGGLQICSTINRNPKSYAMAILGAEVVMRWLPRGTHDWSKFITPDELFDLLRQAGLEPVDRKGFVFNPISWQWSISDRDLSVNYVTASLRPR.

S-adenosyl-L-methionine contacts are provided by Arg40, Gly71, Asp92, and Met135.

This sequence belongs to the methyltransferase superfamily. UbiG/COQ3 family.

It catalyses the reaction a 3-demethylubiquinol + S-adenosyl-L-methionine = a ubiquinol + S-adenosyl-L-homocysteine + H(+). The catalysed reaction is a 3-(all-trans-polyprenyl)benzene-1,2-diol + S-adenosyl-L-methionine = a 2-methoxy-6-(all-trans-polyprenyl)phenol + S-adenosyl-L-homocysteine + H(+). It functions in the pathway cofactor biosynthesis; ubiquinone biosynthesis. In terms of biological role, O-methyltransferase that catalyzes the 2 O-methylation steps in the ubiquinone biosynthetic pathway. This Ruegeria pomeroyi (strain ATCC 700808 / DSM 15171 / DSS-3) (Silicibacter pomeroyi) protein is Ubiquinone biosynthesis O-methyltransferase.